A 521-amino-acid polypeptide reads, in one-letter code: Maturase K (521 aa).

Belongs to the intron maturase 2 family. MatK subfamily.

It localises to the plastid. It is found in the chloroplast. Its function is as follows. Usually encoded in the trnK tRNA gene intron. Probably assists in splicing its own and other chloroplast group II introns. This is Maturase K from Trillium catesbaei (Catesby's trillium).